The sequence spans 185 residues: Ribosome-recycling factor (185 aa).

It belongs to the RRF family.

It is found in the cytoplasm. Functionally, responsible for the release of ribosomes from messenger RNA at the termination of protein biosynthesis. May increase the efficiency of translation by recycling ribosomes from one round of translation to another. The chain is Ribosome-recycling factor from Shewanella loihica (strain ATCC BAA-1088 / PV-4).